The sequence spans 43 residues: uncharacterized protein (43 aa).

The disordered stretch occupies residues glutamine 13–isoleucine 43.

This is an uncharacterized protein from Clover yellow mosaic virus (CYMV).